The primary structure comprises 188 residues: Achaete-scute homolog 5 (188 aa).

Residues 80–93 (AFIQKRNERERQRV) form a basic motif region. The bHLH domain maps to 80–132 (AFIQKRNERERQRVKCVNEGYARLRGHLPGALTEKRLSKVETLRAAIRYIKYL). A helix-loop-helix motif region spans residues 94-132 (KCVNEGYARLRGHLPGALTEKRLSKVETLRAAIRYIKYL). Positions 139 to 188 (TPDGAPPPATSPPPAHTGHSNVPQPSSLVAESSGSPFSSSPFLESEEPSL) are disordered. The span at 142–153 (GAPPPATSPPPA) shows a compositional bias: pro residues. Residues 158–168 (SNVPQPSSLVA) show a composition bias toward polar residues. Over residues 169 to 181 (ESSGSPFSSSPFL) the composition is skewed to low complexity.

Interacts with transcription factor TCF3/E12. In terms of tissue distribution, expressed in teeth (at protein level).

It is found in the nucleus. Transcription factor. Probably binds E-box motifs 5'-CANNTG-3' in complex with transcription factor TCF3/E12. Negatively modulates transcription of target genes such as CDH1/E-cadherin, perhaps by recruiting the PRC2 repressive complex to regulatory elements. Regulates ameloblast development and tooth germ growth, perhaps acting by positively modulating migration of inner enamel epithelium (IEE) cells. Plays a role in enamel formation. The polypeptide is Achaete-scute homolog 5 (Mus musculus (Mouse)).